Reading from the N-terminus, the 128-residue chain is uncharacterized protein (128 aa).

A compositionally biased stretch (basic and acidic residues) spans 1–28 (MDADDFGKKDLENGNESPKKPIFMKDWK). A disordered region spans residues 1 to 30 (MDADDFGKKDLENGNESPKKPIFMKDWKNS).

It localises to the cytoplasm. It is found in the nucleus. This is an uncharacterized protein from Schizosaccharomyces pombe (strain 972 / ATCC 24843) (Fission yeast).